The following is a 451-amino-acid chain: Molybdate-anion transporter (451 aa).

A run of 12 helical transmembrane segments spans residues 1 to 21 (MLVT…VLEF), 45 to 65 (YDFY…GPYL), 79 to 99 (IAII…VSVP), 130 to 150 (FVLM…FSCF), 180 to 200 (NGGI…WLGL), 201 to 221 (GPAS…VLVI), 251 to 271 (VLLL…FIFL), 281 to 301 (APLG…SSLY), 316 to 336 (VLCL…FSTA), 346 to 366 (LLAF…MRFL), 378 to 398 (GVLN…LLVL), and 410 to 430 (MFSL…SLFT).

This sequence belongs to the major facilitator superfamily.

The protein resides in the cell membrane. In terms of biological role, mediates high-affinity intracellular uptake of the rare oligo-element molybdenum. The protein is Molybdate-anion transporter (mfsd5) of Xenopus laevis (African clawed frog).